A 333-amino-acid polypeptide reads, in one-letter code: Adenosine deaminase (333 aa).

Zn(2+) is bound by residues H12 and H14. Residues H14, D16, and G170 each contribute to the substrate site. H197 contacts Zn(2+). E200 (proton donor) is an active-site residue. D278 contacts Zn(2+). D279 serves as a coordination point for substrate.

It belongs to the metallo-dependent hydrolases superfamily. Adenosine and AMP deaminases family. Adenosine deaminase subfamily. It depends on Zn(2+) as a cofactor.

It catalyses the reaction adenosine + H2O + H(+) = inosine + NH4(+). The enzyme catalyses 2'-deoxyadenosine + H2O + H(+) = 2'-deoxyinosine + NH4(+). Its function is as follows. Catalyzes the hydrolytic deamination of adenosine and 2-deoxyadenosine. This is Adenosine deaminase from Escherichia coli O157:H7.